The primary structure comprises 104 residues: UPF0235 protein MTH_637 (104 aa).

It belongs to the UPF0235 family.

The sequence is that of UPF0235 protein MTH_637 from Methanothermobacter thermautotrophicus (strain ATCC 29096 / DSM 1053 / JCM 10044 / NBRC 100330 / Delta H) (Methanobacterium thermoautotrophicum).